Consider the following 340-residue polypeptide: UDP-3-O-acylglucosamine N-acyltransferase (340 aa).

The Proton acceptor role is filled by His238.

It belongs to the transferase hexapeptide repeat family. LpxD subfamily. Homotrimer.

It carries out the reaction a UDP-3-O-[(3R)-3-hydroxyacyl]-alpha-D-glucosamine + a (3R)-hydroxyacyl-[ACP] = a UDP-2-N,3-O-bis[(3R)-3-hydroxyacyl]-alpha-D-glucosamine + holo-[ACP] + H(+). Its pathway is bacterial outer membrane biogenesis; LPS lipid A biosynthesis. Catalyzes the N-acylation of UDP-3-O-acylglucosamine using 3-hydroxyacyl-ACP as the acyl donor. Is involved in the biosynthesis of lipid A, a phosphorylated glycolipid that anchors the lipopolysaccharide to the outer membrane of the cell. This is UDP-3-O-acylglucosamine N-acyltransferase from Psychromonas ingrahamii (strain DSM 17664 / CCUG 51855 / 37).